The chain runs to 607 residues: Phosphoenolpyruvate carboxykinase [GTP] (607 aa).

Substrate is bound by residues arginine 81 and 221-223 (YGG). Mn(2+) contacts are provided by lysine 230 and histidine 250. Serine 272 contacts substrate. GTP is bound at residue 273-278 (ACGKTN). The active site involves cysteine 274. Aspartate 297 contacts Mn(2+). 388-390 (NSR) serves as a coordination point for substrate. GTP contacts are provided by residues arginine 390, arginine 421, and 516 to 519 (FGDN).

Belongs to the phosphoenolpyruvate carboxykinase [GTP] family. In terms of assembly, monomer. The cofactor is Mn(2+).

It localises to the cytoplasm. It catalyses the reaction oxaloacetate + GTP = phosphoenolpyruvate + GDP + CO2. It functions in the pathway carbohydrate biosynthesis; gluconeogenesis. Its function is as follows. Catalyzes the conversion of oxaloacetate (OAA) to phosphoenolpyruvate (PEP), the rate-limiting step in the metabolic pathway that produces glucose from lactate and other precursors derived from the citric acid cycle. The protein is Phosphoenolpyruvate carboxykinase [GTP] of Renibacterium salmoninarum (strain ATCC 33209 / DSM 20767 / JCM 11484 / NBRC 15589 / NCIMB 2235).